Here is a 547-residue protein sequence, read N- to C-terminus: MIDLFAIVNKGGIVLWKKTNSLVNLKCLQVLFHEAFLSEQRTVNNTVTFDRYTMQYQEATQYSIVFVVVFQDLKCMAYSQSLLNSAHNIFLNLFKEKLEDRQVPNEAEVEKLFAPIFNRKSAQLENETDTKSLPVEANNDNSARKKNEYEMKKKGAQSKQTNAPKKGKKQLRKWDDQITEEEQAALNYSSQASSASQTVDNSQLSSIVGNNNKFQKTGSGDVIISDLEMDPNQTISNKSASSAFSLFSNLIGGKYLKEEDLSPILKQMQEHLTKKNVANSIALELCESVKASLINKKVGSFDTVKNTVNKAFRDRLTQILTPSTSLDLLHSIRSVRKNENRPYTISLIGVNGVGKSTTLAKIAYWLLSNNFRILVAACDTFRSGAIEQLGVHVKNLQSLKGSSIELFAQGYGKDSSFVVKNAVEYAKQNSFDVILIDTAGRRHNDQRLMGSLEKFTKATKLDKIFQVAEALVGTDSLAQAKHFQASLYHRPLDGFIISKVDTVGQLVGVMVGMVYAVRVPIIFVGIGQTYSDLRTLSVDWVVDQLMK.

Positions 124-174 (LENETDTKSLPVEANNDNSARKKNEYEMKKKGAQSKQTNAPKKGKKQLRKW) are disordered. Residues 142–153 (SARKKNEYEMKK) show a composition bias toward basic and acidic residues. An NG domain region spans residues 343-546 (YTISLIGVNG…SVDWVVDQLM (204 aa)). GTP is bound by residues 349 to 356 (GVNGVGKS), 437 to 441 (DTAGR), and 498 to 501 (SKVD).

The protein belongs to the GTP-binding SRP family. Heterodimer of an alpha and a beta chain.

The protein localises to the endoplasmic reticulum membrane. In terms of biological role, component of the SRP (signal recognition particle) receptor (SR). Ensures, in conjunction with the signal recognition particle, the correct targeting of the nascent secretory proteins to the endoplasmic reticulum membrane system. GTP hydrolysis may enhance the fidelity of and provide unidirectionality to the targeting reaction. The sequence is that of Signal recognition particle receptor subunit alpha homolog (srp101) from Schizosaccharomyces pombe (strain 972 / ATCC 24843) (Fission yeast).